The following is a 201-amino-acid chain: Aminoglycoside N(6')-acetyltransferase type 1 (201 aa).

The 168-residue stretch at 25–192 folds into the N-acetyltransferase domain; that stretch reads VTLRLMTEHD…PAVYMVQTRQ (168 aa). Substrate-binding residues include tryptophan 51 and aspartate 154. Asparagine 159 contacts acetyl-CoA.

As to quaternary structure, homodimer.

The catalysed reaction is kanamycin B + acetyl-CoA = N(6')-acetylkanamycin B + CoA + H(+). Catalyzes the transfer of an acetyl group from acetyl-CoA to the 6'-amino group of aminoglycoside molecules conferring resistance to antibiotics containing the purpurosamine ring including amikacin. This is Aminoglycoside N(6')-acetyltransferase type 1 (aacA4) from Klebsiella pneumoniae.